We begin with the raw amino-acid sequence, 351 residues long: sn-1 oleoyl-lipid 12-desaturase (351 aa).

Positions 1–20 (MTLSIVKSEDSSSRPSAVPS) are disordered. Transmembrane regions (helical) follow at residues 44 to 62 (AWMT…WLGI) and 68 to 88 (FLLP…FVIG). The Histidine box-1 signature appears at 89-93 (HDCGH). A helical transmembrane segment spans residues 100-120 (VWVNDWVGHILFLPIIYPFHS). The short motif at 125–129 (HNQHH) is the Histidine box-2 element. A run of 2 helical transmembrane segments spans residues 199-219 (LLVI…IGVW) and 221-241 (FVKF…TFTL). Residues 289–293 (HHVTT) carry the Histidine box-3 motif.

Belongs to the fatty acid desaturase type 2 family. Requires Fe(2+) as cofactor.

It localises to the cellular thylakoid membrane. It catalyses the reaction a 1-[(9Z)-octadecenoyl]-2-acyl-glycerolipid + 2 reduced [2Fe-2S]-[ferredoxin] + O2 + 2 H(+) = a 1-[(9Z,12Z)-octadecdienoyl]-2-acyl-glycerolipid + 2 oxidized [2Fe-2S]-[ferredoxin] + 2 H2O. The protein operates within lipid metabolism; polyunsaturated fatty acid biosynthesis. Desaturase involved in fatty acid biosynthesis. Introduces a double bond at carbon 12 of oleoyl groups (18:1) attached to the sn-1 position of the glycerol moiety of membrane glycerolipids. This Arthrospira platensis (Spirulina platensis) protein is sn-1 oleoyl-lipid 12-desaturase.